The sequence spans 252 residues: MTIESVPRSGFGYFIFGIKIALSPSIRKFVLLPLIANVLLVGGALFYIFSNLNTWIEGWIGALPSFLSWLSYILWPLLVLTVLATFSYFFSTLANFIAAPFNGLLAEKVEELLSGKKVNDDGLLDVLKDTPRILAREWRKLVYILPKAIGLFLLLLIPALGQTVAPFLWFIFTAWMLAIQYADYPFDNHKIKFDDMRNNLKQKQGKSYSFGALVSVFTTIPVLNLIVMPVAVCGATAMWVAEFKDQALRSRL.

A run of 5 helical transmembrane segments spans residues 29–49 (FVLLPLIANVLLVGGALFYIF), 66–86 (FLSWLSYILWPLLVLTVLATF), 141–160 (LVYILPKAIGLFLLLLIPAL), 164–186 (VAPFLWFIFTAWMLAIQYADYPF), and 212–232 (ALVSVFTTIPVLNLIVMPVAV).

Belongs to the CysZ family.

It is found in the cell inner membrane. Functionally, high affinity, high specificity proton-dependent sulfate transporter, which mediates sulfate uptake. Provides the sulfur source for the cysteine synthesis pathway. The sequence is that of Sulfate transporter CysZ from Vibrio atlanticus (strain LGP32) (Vibrio splendidus (strain Mel32)).